The following is a 1755-amino-acid chain: E3 ubiquitin-protein ligase UBR2 (1755 aa).

A2 carries the post-translational modification N-acetylalanine. K94 participates in a covalent cross-link: Glycyl lysine isopeptide (Lys-Gly) (interchain with G-Cter in ubiquitin). The UBR-type zinc-finger motif lies at 97-168 (HLCGRVFKVG…EGPYCQKHKL (72 aa)). C99, C112, C115, C124, C127, H133, and H136 together coordinate Zn(2+). Residue F148 participates in a peptide binding. C149 provides a ligand contact to Zn(2+). Residue D150 participates in a peptide binding. C151 is a Zn(2+) binding site. D153 provides a ligand contact to a peptide. A Glycyl lysine isopeptide (Lys-Gly) (interchain with G-Cter in ubiquitin) cross-link involves residue K158. C163 is a Zn(2+) binding site. Residue K165 forms a Glycyl lysine isopeptide (Lys-Gly) (interchain with G-Cter in ubiquitin) linkage. H166 is a binding site for Zn(2+). Glycyl lysine isopeptide (Lys-Gly) (interchain with G-Cter in ubiquitin) cross-links involve residues K248, K255, and K470. S476 carries the post-translational modification Phosphoserine. Glycyl lysine isopeptide (Lys-Gly) (interchain with G-Cter in ubiquitin) cross-links involve residues K488, K568, K779, and K789. Positions 1012 to 1033 (AEAEGTIMEESSRDKDKAERKR) are disordered. The stretch at 1019 to 1054 (MEESSRDKDKAERKRKAEIARLRREKIMAQMSEMQR) forms a coiled coil. The segment covering 1021-1033 (ESSRDKDKAERKR) has biased composition (basic and acidic residues). Residues C1108, C1111, C1168, H1170, H1173, C1176, C1210, and C1213 each coordinate Zn(2+). The RING-type; atypical zinc finger occupies 1108-1214 (CILCQEEQEV…NGEFLCPLCE (107 aa)). Residues K1496, K1599, and K1689 each participate in a glycyl lysine isopeptide (Lys-Gly) (interchain with G-Cter in ubiquitin) cross-link. S1694 is modified (phosphoserine). Position 1697 is a phosphotyrosine (Y1697).

The protein belongs to the E3 ubiquitin-protein ligase UBR1-like family. Interacts with UBE2B; promotes the UBE2B-H2A interaction and the ubiquitination of histone H2A by UBE2B and UBR2. Interacts with RECQL4. Interacts with Tex19.1 and Tex19.2; does not lead to Tex19.1 degradation and stabilizes it. Interacts with L1RE1. Interacts with CASP8. Interacts with ATXN3. Interacts with UBE2O. In terms of processing, dephosphorylated by DUSP22 at Ser-1694 and Tyr-1697, leading to subsequent ubiquitination and proteasomal degradation. 'Lys-48'-linked ubiquitinated at Lys-94, Lys-779 and Lys-1599 following DUSP22-mediated dephosphorylation of Ser-1694 and Tyr-1697 which promotes UBR2 interaction with the SCF(FBW1A) E3 ubiquitin-protein ligase complex. As to expression, highly expressed in skeletal muscle. Also expressed in heart, kidney and testis. Expressed in acinar cells of the pancreas. In testes, expressed primarily in spermatocytes. Expressed in cerebellum.

Its subcellular location is the nucleus. The protein localises to the chromosome. It carries out the reaction S-ubiquitinyl-[E2 ubiquitin-conjugating enzyme]-L-cysteine + [acceptor protein]-L-lysine = [E2 ubiquitin-conjugating enzyme]-L-cysteine + N(6)-ubiquitinyl-[acceptor protein]-L-lysine.. It functions in the pathway protein modification; protein ubiquitination. E3 ubiquitin-protein ligase which is a component of the N-end rule pathway. Recognizes and binds to proteins bearing specific N-terminal residues (N-degrons) that are destabilizing according to the N-end rule, leading to their ubiquitination and subsequent degradation. Recognizes both type-1 and type-2 N-degrons, containing positively charged amino acids (Arg, Lys and His) and bulky and hydrophobic amino acids, respectively. Does not ubiquitinate proteins that are acetylated at the N-terminus. In contrast, it strongly binds methylated N-degrons. Plays a critical role in chromatin inactivation and chromosome-wide transcriptional silencing during meiosis via ubiquitination of histone H2A. Binds leucine and is a negative regulator of the leucine-mTOR signaling pathway, thereby controlling cell growth. Required for spermatogenesis, promotes, with Tex19.1, SPO11-dependent recombination foci to accumulate and drive robust homologous chromosome synapsis. Polyubiquitinates LINE-1 retrotransposon encoded, LIRE1, which induces degradation, inhibiting LINE-1 retrotransposon mobilization. Catalyzes ubiquitination and degradation of the N-terminal part of NLRP1B following NLRP1B activation by pathogens and other damage-associated signals: ubiquitination promotes degradation of the N-terminal part and subsequent release of the cleaved C-terminal part of NLRP1B, which polymerizes and forms the NLRP1B inflammasome followed by host cell pyroptosis. Plays a role in T-cell receptor signaling by inducing 'Lys-63'-linked ubiquitination of lymphocyte cell-specific kinase LCK. This activity is regulated by DUSP22, which induces 'Lys-48'-linked ubiquitination of UBR2, leading to its proteasomal degradation by SCF E3 ubiquitin-protein ligase complex. The protein is E3 ubiquitin-protein ligase UBR2 of Mus musculus (Mouse).